The sequence spans 417 residues: NADH-quinone oxidoreductase subunit D (417 aa).

It belongs to the complex I 49 kDa subunit family. In terms of assembly, NDH-1 is composed of 14 different subunits. Subunits NuoB, C, D, E, F, and G constitute the peripheral sector of the complex.

Its subcellular location is the cell inner membrane. The enzyme catalyses a quinone + NADH + 5 H(+)(in) = a quinol + NAD(+) + 4 H(+)(out). NDH-1 shuttles electrons from NADH, via FMN and iron-sulfur (Fe-S) centers, to quinones in the respiratory chain. The immediate electron acceptor for the enzyme in this species is believed to be ubiquinone. Couples the redox reaction to proton translocation (for every two electrons transferred, four hydrogen ions are translocated across the cytoplasmic membrane), and thus conserves the redox energy in a proton gradient. In Chromobacterium violaceum (strain ATCC 12472 / DSM 30191 / JCM 1249 / CCUG 213 / NBRC 12614 / NCIMB 9131 / NCTC 9757 / MK), this protein is NADH-quinone oxidoreductase subunit D.